The sequence spans 928 residues: Isoleucine--tRNA ligase (928 aa).

The 'HIGH' region motif lies at 57-67 (PFANGNIHMGH). Glutamate 552 contacts L-isoleucyl-5'-AMP. The 'KMSKS' region signature appears at 593–597 (KMSKS). Lysine 596 provides a ligand contact to ATP. Zn(2+)-binding residues include cysteine 887, cysteine 890, cysteine 907, and cysteine 910.

This sequence belongs to the class-I aminoacyl-tRNA synthetase family. IleS type 1 subfamily. As to quaternary structure, monomer. Requires Zn(2+) as cofactor.

The protein localises to the cytoplasm. The enzyme catalyses tRNA(Ile) + L-isoleucine + ATP = L-isoleucyl-tRNA(Ile) + AMP + diphosphate. Catalyzes the attachment of isoleucine to tRNA(Ile). As IleRS can inadvertently accommodate and process structurally similar amino acids such as valine, to avoid such errors it has two additional distinct tRNA(Ile)-dependent editing activities. One activity is designated as 'pretransfer' editing and involves the hydrolysis of activated Val-AMP. The other activity is designated 'posttransfer' editing and involves deacylation of mischarged Val-tRNA(Ile). The chain is Isoleucine--tRNA ligase from Latilactobacillus sakei subsp. sakei (strain 23K) (Lactobacillus sakei subsp. sakei).